Consider the following 486-residue polypeptide: Cephamycin export protein CmcT (486 aa).

14 helical membrane passes run 24-44 (VLAC…TVAL), 56-76 (ASLQ…LLFG), 88-108 (VFLG…LATS), 121-141 (AGAA…FAEG), 153-173 (AVAL…TEFL), 178-198 (VLLV…RVLA), 210-230 (LDLP…LGVS), 241-261 (AVAV…VVEA), 284-304 (LAML…TLSM), 317-337 (LGFV…VPWL), 345-365 (VLIA…SLLT), 369-389 (AYLG…GLVG), 418-438 (FGGA…TSGS), and 450-470 (FVGI…LPAL).

The protein belongs to the major facilitator superfamily.

The protein resides in the cell membrane. Involved in cephamycin export. The chain is Cephamycin export protein CmcT (cmcT) from Amycolatopsis lactamdurans (Nocardia lactamdurans).